Reading from the N-terminus, the 278-residue chain is Large ribosomal subunit protein uL2 (278 aa).

Residues 201–278 (HGNINDGKAG…IMRSRHQRKK (78 aa)) form a disordered region. Positions 210–221 (GRSRWRGKKPHV) are enriched in basic residues.

It belongs to the universal ribosomal protein uL2 family. Part of the 50S ribosomal subunit. Forms a bridge to the 30S subunit in the 70S ribosome.

Functionally, one of the primary rRNA binding proteins. Required for association of the 30S and 50S subunits to form the 70S ribosome, for tRNA binding and peptide bond formation. It has been suggested to have peptidyltransferase activity; this is somewhat controversial. Makes several contacts with the 16S rRNA in the 70S ribosome. This Rhizobium rhizogenes (strain K84 / ATCC BAA-868) (Agrobacterium radiobacter) protein is Large ribosomal subunit protein uL2.